The following is a 627-amino-acid chain: tRNA uridine 5-carboxymethylaminomethyl modification enzyme MnmG (627 aa).

FAD is bound by residues 16–21 (GAGHAG), valine 128, and serine 183. 275-289 (GPRYCPSIEDKVMRF) serves as a coordination point for NAD(+). Glutamine 372 is a binding site for FAD.

This sequence belongs to the MnmG family. In terms of assembly, homodimer. Heterotetramer of two MnmE and two MnmG subunits. It depends on FAD as a cofactor.

It is found in the cytoplasm. NAD-binding protein involved in the addition of a carboxymethylaminomethyl (cmnm) group at the wobble position (U34) of certain tRNAs, forming tRNA-cmnm(5)s(2)U34. The sequence is that of tRNA uridine 5-carboxymethylaminomethyl modification enzyme MnmG from Geobacter sulfurreducens (strain ATCC 51573 / DSM 12127 / PCA).